Reading from the N-terminus, the 149-residue chain is Large ribosomal subunit protein uL15 (149 aa).

2 stretches are compositionally biased toward basic residues: residues 1 to 13 (MPTR…KHRG) and 21 to 42 (RIGK…HHHR). Residues 1 to 44 (MPTRLTKTRKHRGNVSAGKGRIGKHRKHPGGRGKAGGQHHHRTN) form a disordered region.

It belongs to the universal ribosomal protein uL15 family. Component of the large ribosomal subunit. Mature ribosomes consist of a small (40S) and a large (60S) subunit. The 40S subunit contains about 32 different proteins and 1 molecule of RNA (18S). The 60S subunit contains 45 different proteins and 3 molecules of RNA (25S, 5.8S and 5S).

Its subcellular location is the cytoplasm. Functionally, component of the ribosome, a large ribonucleoprotein complex responsible for the synthesis of proteins in the cell. The small ribosomal subunit (SSU) binds messenger RNAs (mRNAs) and translates the encoded message by selecting cognate aminoacyl-transfer RNA (tRNA) molecules. The large subunit (LSU) contains the ribosomal catalytic site termed the peptidyl transferase center (PTC), which catalyzes the formation of peptide bonds, thereby polymerizing the amino acids delivered by tRNAs into a polypeptide chain. The nascent polypeptides leave the ribosome through a tunnel in the LSU and interact with protein factors that function in enzymatic processing, targeting, and the membrane insertion of nascent chains at the exit of the ribosomal tunnel. This is Large ribosomal subunit protein uL15 from Candida albicans (strain SC5314 / ATCC MYA-2876) (Yeast).